The following is a 385-amino-acid chain: D-alanine--D-alanine ligase (385 aa).

In terms of domain architecture, ATP-grasp spans 165 to 375 (KRVFTSFGLK…YPELVDRLVE (211 aa)). 201–256 (AGEHGWPLFVKPARAGSSIGITKVDDLAGLDEAVAEAQRHDPKIIVEALLRGREIE) contacts ATP. The Mg(2+) site is built by aspartate 329, glutamate 342, and asparagine 344.

This sequence belongs to the D-alanine--D-alanine ligase family. Mg(2+) serves as cofactor. Requires Mn(2+) as cofactor.

The protein localises to the cytoplasm. It carries out the reaction 2 D-alanine + ATP = D-alanyl-D-alanine + ADP + phosphate + H(+). The protein operates within cell wall biogenesis; peptidoglycan biosynthesis. In terms of biological role, cell wall formation. This is D-alanine--D-alanine ligase from Streptomyces avermitilis (strain ATCC 31267 / DSM 46492 / JCM 5070 / NBRC 14893 / NCIMB 12804 / NRRL 8165 / MA-4680).